The primary structure comprises 218 residues: Phosphatidylserine decarboxylase proenzyme (218 aa).

Catalysis depends on Ser-183, which acts as the Schiff-base intermediate with substrate; via pyruvic acid. Ser-183 is subject to Pyruvic acid (Ser); by autocatalysis.

This sequence belongs to the phosphatidylserine decarboxylase family. PSD-A subfamily. In terms of assembly, heterodimer of a large membrane-associated beta subunit and a small pyruvoyl-containing alpha subunit. Requires pyruvate as cofactor. Post-translationally, is synthesized initially as an inactive proenzyme. Formation of the active enzyme involves a self-maturation process in which the active site pyruvoyl group is generated from an internal serine residue via an autocatalytic post-translational modification. Two non-identical subunits are generated from the proenzyme in this reaction, and the pyruvate is formed at the N-terminus of the alpha chain, which is derived from the carboxyl end of the proenzyme. The post-translation cleavage follows an unusual pathway, termed non-hydrolytic serinolysis, in which the side chain hydroxyl group of the serine supplies its oxygen atom to form the C-terminus of the beta chain, while the remainder of the serine residue undergoes an oxidative deamination to produce ammonia and the pyruvoyl prosthetic group on the alpha chain.

It localises to the cell membrane. It carries out the reaction a 1,2-diacyl-sn-glycero-3-phospho-L-serine + H(+) = a 1,2-diacyl-sn-glycero-3-phosphoethanolamine + CO2. Its pathway is phospholipid metabolism; phosphatidylethanolamine biosynthesis; phosphatidylethanolamine from CDP-diacylglycerol: step 2/2. Functionally, catalyzes the formation of phosphatidylethanolamine (PtdEtn) from phosphatidylserine (PtdSer). The protein is Phosphatidylserine decarboxylase proenzyme of Magnetococcus marinus (strain ATCC BAA-1437 / JCM 17883 / MC-1).